The primary structure comprises 149 residues: MRIADNKKAIFNYHIEERFEAGMVLEGWEVKSVREGKVQLTDGYVVIRGGELFIIGCQINPLGTASTHVRPDSVRTKKLLMHKDEIRRLVGKVEQKGFTLVPLNMHWKAGKVKCEIGLAKGKGEHDKRDTIKDREGKREVERAMKSRSR.

Positions 121 to 149 (GKGEHDKRDTIKDREGKREVERAMKSRSR) are disordered.

The protein belongs to the SmpB family.

It is found in the cytoplasm. Its function is as follows. Required for rescue of stalled ribosomes mediated by trans-translation. Binds to transfer-messenger RNA (tmRNA), required for stable association of tmRNA with ribosomes. tmRNA and SmpB together mimic tRNA shape, replacing the anticodon stem-loop with SmpB. tmRNA is encoded by the ssrA gene; the 2 termini fold to resemble tRNA(Ala) and it encodes a 'tag peptide', a short internal open reading frame. During trans-translation Ala-aminoacylated tmRNA acts like a tRNA, entering the A-site of stalled ribosomes, displacing the stalled mRNA. The ribosome then switches to translate the ORF on the tmRNA; the nascent peptide is terminated with the 'tag peptide' encoded by the tmRNA and targeted for degradation. The ribosome is freed to recommence translation, which seems to be the essential function of trans-translation. The protein is SsrA-binding protein of Polaromonas sp. (strain JS666 / ATCC BAA-500).